The primary structure comprises 122 residues: UPF0102 protein RL0336 (122 aa).

The protein belongs to the UPF0102 family.

In Rhizobium johnstonii (strain DSM 114642 / LMG 32736 / 3841) (Rhizobium leguminosarum bv. viciae), this protein is UPF0102 protein RL0336.